An 84-amino-acid chain; its full sequence is U4-theraphotoxin-Hhn1n (84 aa).

Residues 1-22 (MKVTLIAILTCAAVLVLHTTAA) form the signal peptide. Positions 23–47 (EELEESQLMEVGMPDTELAAVDEER) are excised as a propeptide. 3 cysteine pairs are disulfide-bonded: cysteine 51–cysteine 65, cysteine 55–cysteine 76, and cysteine 70–cysteine 81.

This sequence belongs to the neurotoxin 12 (Hwtx-2) family. 02 (Hwtx-2) subfamily. In terms of tissue distribution, expressed by the venom gland.

Its subcellular location is the secreted. Functionally, postsynaptic neurotoxin. This is U4-theraphotoxin-Hhn1n from Cyriopagopus hainanus (Chinese bird spider).